A 247-amino-acid chain; its full sequence is Probable transcriptional regulatory protein Syncc9605_2132 (247 aa).

This sequence belongs to the TACO1 family.

It is found in the cytoplasm. This chain is Probable transcriptional regulatory protein Syncc9605_2132, found in Synechococcus sp. (strain CC9605).